The chain runs to 335 residues: Glyceraldehyde-3-phosphate dehydrogenase (335 aa).

Residues 10-11, Asp31, Arg75, and Thr122 each bind NAD(+); that span reads RI. Residues 152–154 and Thr183 contribute to the D-glyceraldehyde 3-phosphate site; that span reads SCT. The active-site Nucleophile is the Cys153. Position 184 (Asn184) interacts with NAD(+). D-glyceraldehyde 3-phosphate-binding positions include Arg198, 211–212, and Arg234; that span reads TG. Asn318 lines the NAD(+) pocket.

It belongs to the glyceraldehyde-3-phosphate dehydrogenase family. As to quaternary structure, homotetramer.

The protein localises to the cytoplasm. It catalyses the reaction D-glyceraldehyde 3-phosphate + phosphate + NAD(+) = (2R)-3-phospho-glyceroyl phosphate + NADH + H(+). It functions in the pathway carbohydrate degradation; glycolysis; pyruvate from D-glyceraldehyde 3-phosphate: step 1/5. In terms of biological role, catalyzes the oxidative phosphorylation of glyceraldehyde 3-phosphate (G3P) to 1,3-bisphosphoglycerate (BPG) using the cofactor NAD. The first reaction step involves the formation of a hemiacetal intermediate between G3P and a cysteine residue, and this hemiacetal intermediate is then oxidized to a thioester, with concomitant reduction of NAD to NADH. The reduced NADH is then exchanged with the second NAD, and the thioester is attacked by a nucleophilic inorganic phosphate to produce BPG. The protein is Glyceraldehyde-3-phosphate dehydrogenase (gap) of Borreliella burgdorferi (strain ATCC 35210 / DSM 4680 / CIP 102532 / B31) (Borrelia burgdorferi).